We begin with the raw amino-acid sequence, 521 residues long: Bifunctional purine biosynthesis protein PurH (521 aa).

Residues Met-1 to Thr-149 form the MGS-like domain.

It belongs to the PurH family.

The catalysed reaction is (6R)-10-formyltetrahydrofolate + 5-amino-1-(5-phospho-beta-D-ribosyl)imidazole-4-carboxamide = 5-formamido-1-(5-phospho-D-ribosyl)imidazole-4-carboxamide + (6S)-5,6,7,8-tetrahydrofolate. It catalyses the reaction IMP + H2O = 5-formamido-1-(5-phospho-D-ribosyl)imidazole-4-carboxamide. The protein operates within purine metabolism; IMP biosynthesis via de novo pathway; 5-formamido-1-(5-phospho-D-ribosyl)imidazole-4-carboxamide from 5-amino-1-(5-phospho-D-ribosyl)imidazole-4-carboxamide (10-formyl THF route): step 1/1. It functions in the pathway purine metabolism; IMP biosynthesis via de novo pathway; IMP from 5-formamido-1-(5-phospho-D-ribosyl)imidazole-4-carboxamide: step 1/1. This chain is Bifunctional purine biosynthesis protein PurH, found in Chlorobium phaeobacteroides (strain DSM 266 / SMG 266 / 2430).